The following is a 336-amino-acid chain: Atypical chemokine receptor 1 (336 aa).

Residues 1–63 (MGNCLHPAEL…CNLLDDSALP (63 aa)) lie on the Extracellular side of the membrane. Residues N16, N27, and N33 are each glycosylated (N-linked (GlcNAc...) asparagine). 2 disulfide bridges follow: C51–C276 and C129–C195. The helical transmembrane segment at 64–84 (FFILVSVLGILASGIVLFMFF) threads the bilayer. Residues 85-95 (RPLFHWQLCPG) are Cytoplasmic-facing. Residues 96-116 (WPVLAQLAVGSALFSIVVPIL) form a helical membrane-spanning segment. Residues 117–129 (APGLGNTRSSALC) lie on the Extracellular side of the membrane. A helical transmembrane segment spans residues 130–153 (SLGYCVWYGSAFAQALLLGCHASL). Residues 154-166 (GPKLGADQVPGLT) are Cytoplasmic-facing. A helical membrane pass occupies residues 167–187 (LGLSVGLWGVAALLTLPVTLA). Topologically, residues 188-207 (SGASGGLCTPVYSMELKALQ) are extracellular. Residues 208–228 (ATHAVACLAIFVLLPLGLFGA) traverse the membrane as a helical segment. Topologically, residues 229 to 244 (KGLKKALGMGPGPWMN) are cytoplasmic. The chain crosses the membrane as a helical span at residues 245–265 (ILWAWFIFWWPHGVVLGLDFL). The Extracellular segment spans residues 266 to 287 (VRSKLLLLSTCLAQQALDLLLN). The chain crosses the membrane as a helical span at residues 288–308 (LAEALAILHCVATPLLLALFC). At 309 to 336 (HQATRTLLPSLPLPEGWSSHLDTLGSKS) the chain is on the cytoplasmic side.

Belongs to the G-protein coupled receptor 1 family. Atypical chemokine receptor subfamily.

It is found in the early endosome. It localises to the recycling endosome. Its subcellular location is the membrane. Its function is as follows. Atypical chemokine receptor that controls chemokine levels and localization via high-affinity chemokine binding that is uncoupled from classic ligand-driven signal transduction cascades, resulting instead in chemokine sequestration, degradation, or transcytosis. Also known as interceptor (internalizing receptor) or chemokine-scavenging receptor or chemokine decoy receptor. Has a promiscuous chemokine-binding profile, interacting with inflammatory chemokines of both the CXC and the CC subfamilies but not with homeostatic chemokines. Acts as a receptor for chemokines including CCL2, CCL5, CCL7, CCL11, CCL13, CCL14, CCL17, CXCL5, CXCL6, IL8/CXCL8, CXCL11, GRO, RANTES, MCP-1 and TARC. May regulate chemokine bioavailability and, consequently, leukocyte recruitment through two distinct mechanisms: when expressed in endothelial cells, it sustains the abluminal to luminal transcytosis of tissue-derived chemokines and their subsequent presentation to circulating leukocytes; when expressed in erythrocytes, serves as blood reservoir of cognate chemokines but also as a chemokine sink, buffering potential surges in plasma chemokine levels. The sequence is that of Atypical chemokine receptor 1 (ACKR1) from Papio hamadryas (Hamadryas baboon).